Here is a 128-residue protein sequence, read N- to C-terminus: Leucine-rich single-pass membrane protein 1 (128 aa).

Residue serine 24 is modified to Phosphoserine. A helical transmembrane segment spans residues 66 to 86 (GLLLVLTVSLALVFFAIFLII). A coiled-coil region spans residues 90-111 (NQMEDVSRRLTAEGKDIDDLKK).

Its subcellular location is the membrane. The sequence is that of Leucine-rich single-pass membrane protein 1 (Lsmem1) from Mus musculus (Mouse).